The primary structure comprises 151 residues: Putative pre-16S rRNA nuclease (151 aa).

It belongs to the YqgF nuclease family.

It localises to the cytoplasm. Its function is as follows. Could be a nuclease involved in processing of the 5'-end of pre-16S rRNA. The chain is Putative pre-16S rRNA nuclease from Nitrosospira multiformis (strain ATCC 25196 / NCIMB 11849 / C 71).